The chain runs to 121 residues: Probable V-type proton ATPase subunit F (121 aa).

It belongs to the V-ATPase F subunit family. V-ATPase is a heteromultimeric enzyme made up of two complexes: the ATP-hydrolytic V1 complex and the proton translocation V0 complex. The V1 complex consists of three catalytic AB heterodimers that form a heterohexamer, three peripheral stalks each consisting of EG heterodimers, one central rotor including subunits D and F, and the regulatory subunits C and H. The proton translocation complex V0 consists of the proton transport subunit a, a ring of proteolipid subunits c9c'', rotary subunit d, subunits e and f, and the accessory subunits vah-19/Ac45 and vah-20/PRR.

Its function is as follows. Subunit of the V1 complex of vacuolar(H+)-ATPase (V-ATPase), a multisubunit enzyme composed of a peripheral complex (V1) that hydrolyzes ATP and a membrane integral complex (V0) that translocates protons. V-ATPase is responsible for acidifying and maintaining the pH of intracellular compartments and in some cell types, is targeted to the plasma membrane, where it is responsible for acidifying the extracellular environment. Required along with other vacuolar ATPase components for the removal of protein aggregates which form in immature oocytes in the distal gonad. This removal occurs as the oocytes mature and move to the proximal gonad, is triggered by the introduction of sperm through mating and occurs before fertilization. The introduction of sperm triggers V-ATPase accumulation in proximal oocytes and induces lysosomal acidification which leads to engulfing of protein aggregates by lysosomes and subsequent clearance of the aggregates. Lysosomal acidification also leads to changes in mitochondrial morphology and function. Mitochondria in distal immature oocytes are fragmented, produce high levels of reactive oxygen species (ROS) and have high membrane potential, indicative of metabolic inactivity. In contrast, mitochondria in proximal mature oocytes are tubular with lower ROS levels and membrane potential, indicative of an active metabolic state required for aggregate mobilization before clearance. The polypeptide is Probable V-type proton ATPase subunit F (Caenorhabditis elegans).